The chain runs to 966 residues: Alanine--tRNA ligase, cytoplasmic (966 aa).

Zn(2+) contacts are provided by H604, H608, C723, and H727.

Belongs to the class-II aminoacyl-tRNA synthetase family. Monomer. The cofactor is Zn(2+).

Its subcellular location is the cytoplasm. It catalyses the reaction tRNA(Ala) + L-alanine + ATP = L-alanyl-tRNA(Ala) + AMP + diphosphate. Catalyzes the attachment of alanine to tRNA(Ala) in a two-step reaction: alanine is first activated by ATP to form Ala-AMP and then transferred to the acceptor end of tRNA(Ala). Also edits incorrectly charged tRNA(Ala) via its editing domain. In Drosophila melanogaster (Fruit fly), this protein is Alanine--tRNA ligase, cytoplasmic.